A 456-amino-acid polypeptide reads, in one-letter code: Molybdate transporter 1 (456 aa).

9 helical membrane-spanning segments follow: residues 67–87, 110–130, 133–153, 177–197, 225–245, 309–329, 354–374, 377–397, and 417–437; these read LIFT…PMPV, IMAA…SGLM, VFNI…GLAF, PWLG…IVLV, VIAN…LAFI, AASV…FGAM, LLGV…VGIL, FPVG…AMAA, and LGSN…VLWM.

Belongs to the SLC26A/SulP transporter (TC 2.A.53) family. Strongly expressed in roots. Detected in the vascular tissues of hypocotyls, in petioles and vascular tissues of cotyledons and leaves, in mesophyll cells, stamen, sepals and siliques.

The protein resides in the cell membrane. It is found in the endomembrane system. The protein localises to the mitochondrion membrane. Its activity is regulated as follows. Not inhibited by sulfate. Its function is as follows. High affinity molybdate transporter. Unable to transport sulfate. This Arabidopsis thaliana (Mouse-ear cress) protein is Molybdate transporter 1 (MOT1).